The primary structure comprises 63 residues: Large ribosomal subunit protein uL29 (63 aa).

It belongs to the universal ribosomal protein uL29 family.

The chain is Large ribosomal subunit protein uL29 from Flavobacterium psychrophilum (strain ATCC 49511 / DSM 21280 / CIP 103535 / JIP02/86).